The following is a 135-amino-acid chain: C-type lectin Cal (135 aa).

4 cysteine pairs are disulfide-bonded: C3-C14, C31-C131, C38-C133, and C106-C123. Residues M10–Q132 form the C-type lectin domain. Q96, D98, E104, N119, and D120 together coordinate Ca(2+). Positions Q96–D98 match the Galactose-binding motif.

This sequence belongs to the true venom lectin family. In terms of assembly, homodecamer of disulfide-linked dimers arranged in two pseudo-5-fold symmetric pentamers. Expressed by the venom gland.

It localises to the secreted. In terms of biological role, galactose-binding protein which recognizes specific carbohydrate structures and agglutinates a variety of animal cells by binding to cell-surface glycoproteins and glycolipids. Calcium-dependent lectin. Shows high hemagglutinating activity (MHC=10 ng/ml). This Crotalus atrox (Western diamondback rattlesnake) protein is C-type lectin Cal.